The primary structure comprises 236 residues: 2,3,4,5-tetrahydropyridine-2,6-dicarboxylate N-acetyltransferase (236 aa).

Belongs to the transferase hexapeptide repeat family. DapH subfamily.

The catalysed reaction is (S)-2,3,4,5-tetrahydrodipicolinate + acetyl-CoA + H2O = L-2-acetamido-6-oxoheptanedioate + CoA. The protein operates within amino-acid biosynthesis; L-lysine biosynthesis via DAP pathway; LL-2,6-diaminopimelate from (S)-tetrahydrodipicolinate (acetylase route): step 1/3. Functionally, catalyzes the transfer of an acetyl group from acetyl-CoA to tetrahydrodipicolinate. The protein is 2,3,4,5-tetrahydropyridine-2,6-dicarboxylate N-acetyltransferase of Clostridium botulinum (strain 657 / Type Ba4).